Reading from the N-terminus, the 741-residue chain is Polyribonucleotide nucleotidyltransferase (741 aa).

Mg(2+)-binding residues include aspartate 489 and aspartate 495. The 60-residue stretch at 556 to 615 (PKIDSIQIPVDKIKVVIGKGGETIDKIIAETGVTIDIDEEGLVQIFSSDQDAIDRAKTII) folds into the KH domain. Residues 625–693 (GEVYTVPVVR…EKGRVDASIK (69 aa)) enclose the S1 motif domain. Residues 696–741 (LPKPEKNEDGENGEEHRHCCCSHHKPDHHSESMEAPKKSDESETKE) are disordered. 2 stretches are compositionally biased toward basic and acidic residues: residues 698–713 (KPEK…EHRH) and 723–741 (HHSE…ETKE).

The protein belongs to the polyribonucleotide nucleotidyltransferase family. Mg(2+) is required as a cofactor.

It is found in the cytoplasm. The catalysed reaction is RNA(n+1) + phosphate = RNA(n) + a ribonucleoside 5'-diphosphate. Involved in mRNA degradation. Catalyzes the phosphorolysis of single-stranded polyribonucleotides processively in the 3'- to 5'-direction. The sequence is that of Polyribonucleotide nucleotidyltransferase from Streptococcus thermophilus (strain ATCC BAA-491 / LMD-9).